Consider the following 112-residue polypeptide: CRISPR-associated endoribonuclease Cas2 2 (112 aa).

Asp-15 contributes to the Mg(2+) binding site.

Belongs to the CRISPR-associated endoribonuclease Cas2 protein family. As to quaternary structure, homodimer, forms a heterotetramer with a Cas1 homodimer. It depends on Mg(2+) as a cofactor.

In terms of biological role, CRISPR (clustered regularly interspaced short palindromic repeat), is an adaptive immune system that provides protection against mobile genetic elements (viruses, transposable elements and conjugative plasmids). CRISPR clusters contain sequences complementary to antecedent mobile elements and target invading nucleic acids. CRISPR clusters are transcribed and processed into CRISPR RNA (crRNA). Functions as a ssRNA-specific endoribonuclease. Involved in the integration of spacer DNA into the CRISPR cassette. This chain is CRISPR-associated endoribonuclease Cas2 2, found in Rhodospirillum rubrum (strain ATCC 11170 / ATH 1.1.1 / DSM 467 / LMG 4362 / NCIMB 8255 / S1).